The following is a 1020-amino-acid chain: MPSQRKSPDQKRPRRSLSTSKTAKSQCHSITSYFNSAPPAKLACSTCHKMVPRYDLIRHLDESCANNGVGDDVQVEPAQAGLMSPTVPTSDLPSGPLENVTPQKLSPPKRSLISVQCGSKLGIQQQTSPYFKDALVSKDQNELPNQSVEIMPLGSLTSKLSRRYLNAKKSLAKNEGLASQCPQTSPSTPGTSLTDNCPEMEDKDEVLNSSQKENIYSCAPLKEENASEQKVKNNKITGDESQKASCGEPALTPASAEHASILLSSDSTLVSNTKSSPGDTLVKQESARRADVGLAEPLEVRSHKEVQMTFDAAAKTLVSGEAESNGPTDVDMSDMTTWSNNQELVREAGSVLHCPLEQGSSCGGPSETAQLALSHPYYLRSFLVVLQALLGNEEDMKLFDEQEKAIITRFYQLSASGQKLYVRLFQRKLTWIKMSKLEYEEIASDLTPVVEELKDSGFLQTESELQELSDVLELLSAPELKALAKTFHLVSPGGQKQQLVDAFHKLAKQRSVCTWGKTQPGIRAVILKRAKDLAGRSLRVCKGPRAVFARILLLFSLTDSMEDEEAACGGQGQLSTVLLVNLGRMEFPQYTICRKTQIFRDREDLIRYAAAAHMLSDISAAMASGNWEDAKELARSAKRDWEQLKSHPSLRYHEALPPFLRCFTVGWIYTRISSRAVEVLERLHMYEEAVKELENLLSQKIYCPDSRGRWWDRLALNLHQHLKRLEEAIRCIREGLADPHVRTGHRLSLYQRAVRLRESPSCRKYKHLFSRLPEVAVGDVKHVTITGRLCPQHGMGKSVFVMESGDGANPTTVLCSVEELALGYYRQSGFDQGIHGEGSTFSTLCGLLLWDIIFMDGIPDVFRNAYQASPLDLLTDSFFASREQALEARLQLIHSAPAESLRAWVGEAWQAQQGRVASLVSWDRFTSLQQAQDLVSCLGGPVLSGVCRRLAADFRHCRGGLPDLVVWNSQSHHCKLVEVKGPSDRLSCKQMIWLYELQKLGADVEVCHVVAVGAKSKGLG.

The span at 1–11 shows a compositional bias: basic and acidic residues; that stretch reads MPSQRKSPDQK. A disordered region spans residues 1-24; it reads MPSQRKSPDQKRPRRSLSTSKTAK. The D-box motif lies at 14–22; the sequence is RRSLSTSKT. Residues 41–69 form a UBZ4-type zinc finger; that stretch reads KLACSTCHKMVPRYDLIRHLDESCANNGV. Cysteine 44, cysteine 47, histidine 59, and cysteine 64 together coordinate Zn(2+). The segment at 173 to 208 is disordered; that stretch reads KNEGLASQCPQTSPSTPGTSLTDNCPEMEDKDEVLN. Residues 180-195 are compositionally biased toward polar residues; sequence QCPQTSPSTPGTSLTD. The KEN box signature appears at 212 to 214; the sequence is KEN. Basic and acidic residues predominate over residues 224-242; the sequence is ENASEQKVKNNKITGDESQ. Disordered stretches follow at residues 224–252 and 269–288; these read ENASEQKVKNNKITGDESQKASCGEPALT and LVSNTKSSPGDTLVKQESAR. A compositionally biased stretch (polar residues) spans 269–278; it reads LVSNTKSSPG. The stretch at 673–737 forms a coiled coil; that stretch reads SSRAVEVLER…AIRCIREGLA (65 aa). Residues glutamate 837, aspartate 963, glutamate 978, and valine 979 each contribute to the Mn(2+) site. A VRR-NUC domain is found at 898 to 1010; it reads AESLRAWVGE…GADVEVCHVV (113 aa).

The protein belongs to the FAN1 family. In terms of assembly, interacts with FANCD2 (when monoubiquitinated). Interacts with FANCI, MLH1, MLH3 and PMS2. The cofactor is Mn(2+). Mg(2+) serves as cofactor. Ubiquitinated and degraded during mitotic exit by the APC/C-Cdh1 complex.

It localises to the nucleus. It catalyses the reaction Hydrolytically removes 5'-nucleotides successively from the 3'-hydroxy termini of 3'-hydroxy-terminated oligonucleotides.. Functionally, nuclease required for the repair of DNA interstrand cross-links (ICL) recruited at sites of DNA damage by monoubiquitinated FANCD2. Specifically involved in repair of ICL-induced DNA breaks by being required for efficient homologous recombination, probably in the resolution of homologous recombination intermediates. Not involved in DNA double-strand breaks resection. Acts as a 5'-3' exonuclease that anchors at a cut end of DNA and cleaves DNA successively at every third nucleotide, allowing to excise an ICL from one strand through flanking incisions. Probably keeps excising with 3'-flap annealing until it reaches and unhooks the ICL. Acts at sites that have a 5'-terminal phosphate anchor at a nick or a 1- or 2-nucleotide flap and is augmented by a 3' flap. Also has endonuclease activity toward 5'-flaps. The protein is Fanconi-associated nuclease 1 of Mus musculus (Mouse).